Consider the following 126-residue polypeptide: uncharacterized protein (126 aa).

This is an uncharacterized protein from Salmonella typhi.